Reading from the N-terminus, the 230-residue chain is ATP synthase subunit a (230 aa).

The next 5 helical transmembrane spans lie at 17-37 (LPIT…FIMA), 78-98 (IFPF…IGVI), 107-127 (DLSV…WFGI), 165-187 (LFGN…GFLV), and 198-218 (EAII…AGGI).

It belongs to the ATPase A chain family. As to quaternary structure, F-type ATPases have 2 components, CF(1) - the catalytic core - and CF(0) - the membrane proton channel. CF(1) has five subunits: alpha(3), beta(3), gamma(1), delta(1), epsilon(1). CF(0) has three main subunits: a(1), b(2) and c(9-12). The alpha and beta chains form an alternating ring which encloses part of the gamma chain. CF(1) is attached to CF(0) by a central stalk formed by the gamma and epsilon chains, while a peripheral stalk is formed by the delta and b chains.

It is found in the cell inner membrane. Key component of the proton channel; it plays a direct role in the translocation of protons across the membrane. In Legionella pneumophila (strain Paris), this protein is ATP synthase subunit a.